The following is a 378-amino-acid chain: Spermidine/putrescine import ATP-binding protein PotA (378 aa).

The region spanning 18 to 248 (VQLAGIRKCF…PKNLFVAGFI (231 aa)) is the ABC transporter domain. Residue 50-57 (GPSGCGKT) participates in ATP binding.

It belongs to the ABC transporter superfamily. Spermidine/putrescine importer (TC 3.A.1.11.1) family. In terms of assembly, the complex is composed of two ATP-binding proteins (PotA), two transmembrane proteins (PotB and PotC) and a solute-binding protein (PotD).

Its subcellular location is the cell inner membrane. It carries out the reaction ATP + H2O + polyamine-[polyamine-binding protein]Side 1 = ADP + phosphate + polyamineSide 2 + [polyamine-binding protein]Side 1.. Its function is as follows. Part of the ABC transporter complex PotABCD involved in spermidine/putrescine import. Responsible for energy coupling to the transport system. The chain is Spermidine/putrescine import ATP-binding protein PotA from Shigella dysenteriae serotype 1 (strain Sd197).